The sequence spans 99 residues: NADH-ubiquinone oxidoreductase chain 4L (99 aa).

A run of 3 helical transmembrane segments spans residues 4–24, 29–49, and 63–83; these read MFLMFYLSMIMFLFGCMVFVS, LLSTLLSLEYMVLSLFIFLFF, and FFLTFCVCEGVLGLSILVSMI.

Belongs to the complex I subunit 4L family.

It localises to the mitochondrion membrane. The catalysed reaction is a ubiquinone + NADH + 5 H(+)(in) = a ubiquinol + NAD(+) + 4 H(+)(out). In terms of biological role, core subunit of the mitochondrial membrane respiratory chain NADH dehydrogenase (Complex I) that is believed to belong to the minimal assembly required for catalysis. Complex I functions in the transfer of electrons from NADH to the respiratory chain. The immediate electron acceptor for the enzyme is believed to be ubiquinone. The sequence is that of NADH-ubiquinone oxidoreductase chain 4L (ND4L) from Anopheles quadrimaculatus (Common malaria mosquito).